A 671-amino-acid polypeptide reads, in one-letter code: Replication protein A 70 kDa DNA-binding subunit (671 aa).

Disordered stretches follow at residues 143 to 166 (QVSQ…PAVN) and 190 to 219 (MNKT…LQIS). Residues 199–213 (NNNNNNNNNGNNKNN) are compositionally biased toward low complexity. The segment at residues 240-322 (QTIKVRITKK…NKGDHTVTVN (83 aa)) is a DNA-binding region (OB). The C4-type zinc-finger motif lies at 530–549 (CFSCKKKIARNNEVWTCINC).

It belongs to the replication factor A protein 1 family. In terms of assembly, component of the replication protein A complex (RPA), a heterotrimeric complex composed of RPA1, RPA2/TEB2 and RPA3/TEB3.

Its function is as follows. As part of the heterotrimeric replication protein A (RPA) complex, binds and stabilizes single-stranded DNA intermediates, that form during DNA replication or upon DNA stress. It prevents their reannealing and in parallel, recruits and activates different proteins and complexes involved in DNA metabolism. Thereby, it plays an essential role both in DNA replication and the cellular response to DNA damage. In the cellular response to DNA damage, the RPA complex controls DNA repair and DNA damage checkpoint activation. In Tetrahymena thermophila (strain SB210), this protein is Replication protein A 70 kDa DNA-binding subunit.